The following is a 424-amino-acid chain: Putative histone deacetylase complex subunit cti6 (424 aa).

4 disordered regions span residues 1–49, 117–155, 170–341, and 381–405; these read MPSN…GEVT, SKYL…TMNS, KEKS…PDGT, and AQSA…ETLR. The PHD-type zinc finger occupies 48–103; sequence VTRCVCGIVESDDEASDGGLYIQCDQCSVWQHGNCVGFADESEVPEVYYCEICHPE. Low complexity predominate over residues 127 to 137; that stretch reads EASQTEESSST. At S187 the chain carries Phosphoserine. Residues 241–256 are compositionally biased toward acidic residues; it reads DAPEEETVDTVEEIAD. Basic and acidic residues predominate over residues 257 to 266; sequence EEKHSVKEES. Low complexity predominate over residues 272–287; sequence QSSQQSTITSISTTTR. Residues 294-303 show a composition bias toward basic and acidic residues; it reads REAAAEDKAD. The segment covering 313–324 has biased composition (basic residues); that stretch reads SKTRKVGGRRGK. Over residues 392–405 the composition is skewed to basic and acidic residues; that stretch reads SSKEGPEEEKETLR.

Its subcellular location is the cytoplasm. It localises to the nucleus. Functionally, could be a component of the RPD3C(L) histone deacetylase complex (HDAC). The sequence is that of Putative histone deacetylase complex subunit cti6 (cti6) from Schizosaccharomyces pombe (strain 972 / ATCC 24843) (Fission yeast).